The primary structure comprises 317 residues: MKVLWAALLVTFLAGCQAKVEQPVEPETEPELRQQAEWQSGQPWELALGRFWDYLRWVQTLSEQVQEELLSPQVTQELTTLMDETMKELKAYKSELEEQLSPVAEETRARLSKELQAAQARLGADMEDVRSRLVQYRSELQAMLGQSTEELRARLASHLRKLRKRLLRDADDLQKRLAVYQAGAREGAERGVSAIRERLGPLVEQGRVRAATVGSLASQPLQERAQALGERLRARMEEMGSRTRDRLDEVKEQVAEVRAKLEEQAQQISLQAEAFQARLKSWFEPLVEDMQRQWAGLVEKVQAAVGASTAPVPSDNH.

The first 18 residues, 1 to 18 (MKVLWAALLVTFLAGCQA), serve as a signal peptide directing secretion. Repeat copies occupy residues 80–101 (TLMD…EQLS), 102–123 (PVAE…ARLG), 124–145 (ADME…AMLG), 146–167 (QSTE…KRLL), 168–189 (RDAD…EGAE), 190–211 (RGVS…VRAA), 212–233 (TVGS…ERLR), and 234–255 (ARME…EQVA). The segment at 80–255 (TLMDETMKEL…RLDEVKEQVA (176 aa)) is 8 X 22 AA approximate tandem repeats. The residue at position 143 (Met143) is a Methionine sulfoxide. A Phosphoserine modification is found at Ser147. Residues 158–168 (HLRKLRKRLLR) form an LDL and other lipoprotein receptors binding region. 162 to 165 (LRKR) is a heparin binding site. A lipid-binding and lipoprotein association region spans residues 210 to 290 (AATVGSLASQ…SWFEPLVEDM (81 aa)). A heparin-binding site is contributed by 229–236 (GERLRARM). The tract at residues 266–317 (QQISLQAEAFQARLKSWFEPLVEDMQRQWAGLVEKVQAAVGASTAPVPSDNH) is homooligomerization. Positions 278-290 (RLKSWFEPLVEDM) are specificity for association with VLDL.

The protein belongs to the apolipoprotein A1/A4/E family. Homotetramer. May interact with ABCA1; functionally associated with ABCA1 in the biogenesis of HDLs. May interact with APP/A4 amyloid-beta peptide; the interaction is extremely stable in vitro but its physiological significance is unclear. May interact with MAPT. May interact with MAP2. In the cerebrospinal fluid, interacts with secreted SORL1. Interacts with PMEL; this allows the loading of PMEL luminal fragment on ILVs to induce fibril nucleation. In terms of processing, APOE exists as multiple glycosylated and sialylated glycoforms within cells and in plasma. The extent of glycosylation and sialylation are tissue and context specific. Post-translationally, glycated in plasma VLDL. Phosphorylated by FAM20C in the extracellular medium.

It localises to the secreted. The protein localises to the extracellular space. It is found in the extracellular matrix. Its subcellular location is the extracellular vesicle. The protein resides in the endosome. It localises to the multivesicular body. In terms of biological role, APOE is an apolipoprotein, a protein associating with lipid particles, that mainly functions in lipoprotein-mediated lipid transport between organs via the plasma and interstitial fluids. APOE is a core component of plasma lipoproteins and is involved in their production, conversion and clearance. Apolipoproteins are amphipathic molecules that interact both with lipids of the lipoprotein particle core and the aqueous environment of the plasma. As such, APOE associates with chylomicrons, chylomicron remnants, very low density lipoproteins (VLDL) and intermediate density lipoproteins (IDL) but shows a preferential binding to high-density lipoproteins (HDL). It also binds a wide range of cellular receptors including the LDL receptor/LDLR, the LDL receptor-related proteins LRP1, LRP2 and LRP8 and the very low-density lipoprotein receptor/VLDLR that mediate the cellular uptake of the APOE-containing lipoprotein particles. Finally, APOE also has a heparin-binding activity and binds heparan-sulfate proteoglycans on the surface of cells, a property that supports the capture and the receptor-mediated uptake of APOE-containing lipoproteins by cells. A main function of APOE is to mediate lipoprotein clearance through the uptake of chylomicrons, VLDLs, and HDLs by hepatocytes. APOE is also involved in the biosynthesis by the liver of VLDLs as well as their uptake by peripheral tissues ensuring the delivery of triglycerides and energy storage in muscle, heart and adipose tissues. By participating in the lipoprotein-mediated distribution of lipids among tissues, APOE plays a critical role in plasma and tissues lipid homeostasis. APOE is also involved in two steps of reverse cholesterol transport, the HDLs-mediated transport of cholesterol from peripheral tissues to the liver, and thereby plays an important role in cholesterol homeostasis. First, it is functionally associated with ABCA1 in the biogenesis of HDLs in tissues. Second, it is enriched in circulating HDLs and mediates their uptake by hepatocytes. APOE also plays an important role in lipid transport in the central nervous system, regulating neuron survival and sprouting. The chain is Apolipoprotein E (APOE) from Theropithecus gelada (Gelada baboon).